Consider the following 115-residue polypeptide: MARVKRGNVARKRRNKILRLARGFRGGNGTQFRTANQRVMKALCNAYRDRRRRKRDFRRLWIARINAAARINGVSYSRLMGGLKKADVRINRKMLAQLAVADPASFTTVVTAAKS.

The protein belongs to the bacterial ribosomal protein bL20 family.

Its function is as follows. Binds directly to 23S ribosomal RNA and is necessary for the in vitro assembly process of the 50S ribosomal subunit. It is not involved in the protein synthesizing functions of that subunit. The chain is Large ribosomal subunit protein bL20 from Synechococcus sp. (strain CC9902).